The following is a 380-amino-acid chain: Probable tRNA sulfurtransferase (380 aa).

The 105-residue stretch at 58-162 (EEVIERLKKV…MAFVYAGVIE (105 aa)) folds into the THUMP domain. ATP is bound by residues 178–179 (LL), 203–204 (YF), R260, G282, and Q291.

Belongs to the ThiI family.

Its subcellular location is the cytoplasm. The catalysed reaction is [ThiI sulfur-carrier protein]-S-sulfanyl-L-cysteine + a uridine in tRNA + 2 reduced [2Fe-2S]-[ferredoxin] + ATP + H(+) = [ThiI sulfur-carrier protein]-L-cysteine + a 4-thiouridine in tRNA + 2 oxidized [2Fe-2S]-[ferredoxin] + AMP + diphosphate. It catalyses the reaction [ThiS sulfur-carrier protein]-C-terminal Gly-Gly-AMP + S-sulfanyl-L-cysteinyl-[cysteine desulfurase] + AH2 = [ThiS sulfur-carrier protein]-C-terminal-Gly-aminoethanethioate + L-cysteinyl-[cysteine desulfurase] + A + AMP + 2 H(+). It functions in the pathway cofactor biosynthesis; thiamine diphosphate biosynthesis. Functionally, catalyzes the ATP-dependent transfer of a sulfur to tRNA to produce 4-thiouridine in position 8 of tRNAs, which functions as a near-UV photosensor. Also catalyzes the transfer of sulfur to the sulfur carrier protein ThiS, forming ThiS-thiocarboxylate. This is a step in the synthesis of thiazole, in the thiamine biosynthesis pathway. The sulfur is donated as persulfide by IscS. This chain is Probable tRNA sulfurtransferase, found in Thermoanaerobacter sp. (strain X514).